Consider the following 466-residue polypeptide: Putative ABC transporter ATP-binding protein MG065 (466 aa).

One can recognise an ABC transporter domain in the interval 233–463 (IELKNVYKYI…NLNPKQVEEI (231 aa)). Residue 269–276 (GPSGSGKT) coordinates ATP.

It belongs to the ABC transporter superfamily.

The protein is Putative ABC transporter ATP-binding protein MG065 of Mycoplasma genitalium (strain ATCC 33530 / DSM 19775 / NCTC 10195 / G37) (Mycoplasmoides genitalium).